Reading from the N-terminus, the 228-residue chain is HTH-type transcriptional repressor RspR (228 aa).

Positions 11 to 78 (QPVNQQIYRI…PQRGSYVNKI (68 aa)) constitute an HTH gntR-type domain. A DNA-binding region (H-T-H motif) is located at residues 38–57 (EKEVSVRFNVSRQPVREAFI).

Its function is as follows. Repressor of the rspAB operon. Acts by binding directly to the upstream region of rspA. The protein is HTH-type transcriptional repressor RspR (rspR) of Escherichia coli (strain K12).